An 858-amino-acid polypeptide reads, in one-letter code: Translation initiation factor IF-2 (858 aa).

Residues lysine 59–lysine 147 form a disordered region. The 170-residue stretch at proline 361–lysine 530 folds into the tr-type G domain. The tract at residues glycine 370–threonine 377 is G1. Residue glycine 370 to threonine 377 coordinates GTP. Positions glycine 395–histidine 399 are G2. Positions aspartate 416–glycine 419 are G3. Residues aspartate 416–histidine 420 and asparagine 470–aspartate 473 contribute to the GTP site. The segment at asparagine 470 to aspartate 473 is G4. The interval serine 506 to lysine 508 is G5.

It belongs to the TRAFAC class translation factor GTPase superfamily. Classic translation factor GTPase family. IF-2 subfamily.

Its subcellular location is the cytoplasm. In terms of biological role, one of the essential components for the initiation of protein synthesis. Protects formylmethionyl-tRNA from spontaneous hydrolysis and promotes its binding to the 30S ribosomal subunits. Also involved in the hydrolysis of GTP during the formation of the 70S ribosomal complex. This chain is Translation initiation factor IF-2, found in Caldicellulosiruptor saccharolyticus (strain ATCC 43494 / DSM 8903 / Tp8T 6331).